Reading from the N-terminus, the 325-residue chain is Thioredoxin reductase (325 aa).

FAD contacts are provided by residues 10 to 13 (SGPS), 39 to 40 (IA), glutamine 44, asparagine 53, valine 86, cysteine 143, aspartate 286, and 293 to 295 (RQA). A disulfide bridge links cysteine 140 with cysteine 143.

This sequence belongs to the class-II pyridine nucleotide-disulfide oxidoreductase family. As to quaternary structure, homodimer. It depends on FAD as a cofactor.

The protein localises to the cytoplasm. It carries out the reaction [thioredoxin]-dithiol + NADP(+) = [thioredoxin]-disulfide + NADPH + H(+). This is Thioredoxin reductase (TRR1) from Pneumocystis carinii.